The chain runs to 513 residues: uncharacterized protein (513 aa).

In terms of domain architecture, TRAM spans 3–61 (NLKIGQKLQLEIERMGINGEGIGVISGRLVFIPYALPGEEVLVEITENARNFSRAKLVK). Positions 309, 338, 359, and 407 each coordinate S-adenosyl-L-methionine. Cys-434 functions as the Nucleophile in the catalytic mechanism.

This sequence belongs to the class I-like SAM-binding methyltransferase superfamily. RNA M5U methyltransferase family.

This is an uncharacterized protein from Lactococcus lactis subsp. lactis (strain IL1403) (Streptococcus lactis).